The following is a 353-amino-acid chain: uncharacterized protein (353 aa).

Belongs to the MG067/MG068/MG395 family.

This is an uncharacterized protein from Mycoplasma pneumoniae (strain ATCC 29342 / M129 / Subtype 1) (Mycoplasmoides pneumoniae).